A 283-amino-acid chain; its full sequence is tRNA-cytidine(32) 2-sulfurtransferase (283 aa).

Residues S37–S42 carry the PP-loop motif motif. The [4Fe-4S] cluster site is built by C112, C115, and C203.

This sequence belongs to the TtcA family. In terms of assembly, homodimer. Mg(2+) is required as a cofactor. [4Fe-4S] cluster serves as cofactor.

The protein localises to the cytoplasm. The enzyme catalyses cytidine(32) in tRNA + S-sulfanyl-L-cysteinyl-[cysteine desulfurase] + AH2 + ATP = 2-thiocytidine(32) in tRNA + L-cysteinyl-[cysteine desulfurase] + A + AMP + diphosphate + H(+). Its pathway is tRNA modification. Functionally, catalyzes the ATP-dependent 2-thiolation of cytidine in position 32 of tRNA, to form 2-thiocytidine (s(2)C32). The sulfur atoms are provided by the cysteine/cysteine desulfurase (IscS) system. The polypeptide is tRNA-cytidine(32) 2-sulfurtransferase (Legionella pneumophila (strain Paris)).